The chain runs to 269 residues: GTP cyclohydrolase FolE2 (269 aa).

The protein belongs to the GTP cyclohydrolase IV family.

It catalyses the reaction GTP + H2O = 7,8-dihydroneopterin 3'-triphosphate + formate + H(+). It functions in the pathway cofactor biosynthesis; 7,8-dihydroneopterin triphosphate biosynthesis; 7,8-dihydroneopterin triphosphate from GTP: step 1/1. Converts GTP to 7,8-dihydroneopterin triphosphate. The polypeptide is GTP cyclohydrolase FolE2 (Burkholderia thailandensis (strain ATCC 700388 / DSM 13276 / CCUG 48851 / CIP 106301 / E264)).